The following is a 282-amino-acid chain: Large ribosomal subunit protein uL2 (282 aa).

Disordered regions lie at residues Lys26–Gly55 and Pro218–Ser266. Over residues Leu34–Arg43 the composition is skewed to polar residues. Positions Thr254–Ser266 are enriched in basic residues.

This sequence belongs to the universal ribosomal protein uL2 family. As to quaternary structure, part of the 50S ribosomal subunit. Forms a bridge to the 30S subunit in the 70S ribosome.

Its function is as follows. One of the primary rRNA binding proteins. Required for association of the 30S and 50S subunits to form the 70S ribosome, for tRNA binding and peptide bond formation. It has been suggested to have peptidyltransferase activity; this is somewhat controversial. Makes several contacts with the 16S rRNA in the 70S ribosome. The sequence is that of Large ribosomal subunit protein uL2 from Pediococcus pentosaceus (strain ATCC 25745 / CCUG 21536 / LMG 10740 / 183-1w).